The primary structure comprises 532 residues: Phosphoenolpyruvate carboxykinase (ATP) (532 aa).

Substrate-binding residues include Arg60, Tyr194, and Lys200. Residues Lys200, His219, and 237 to 245 (GLSGTGKTT) each bind ATP. Mn(2+) contacts are provided by Lys200 and His219. Asp258 is a binding site for Mn(2+). Residues Glu286, Arg324, and Thr449 each contribute to the ATP site. Arg324 serves as a coordination point for substrate.

This sequence belongs to the phosphoenolpyruvate carboxykinase (ATP) family. Mn(2+) is required as a cofactor.

The protein resides in the cytoplasm. The enzyme catalyses oxaloacetate + ATP = phosphoenolpyruvate + ADP + CO2. It functions in the pathway carbohydrate biosynthesis; gluconeogenesis. Involved in the gluconeogenesis. Catalyzes the conversion of oxaloacetate (OAA) to phosphoenolpyruvate (PEP) through direct phosphoryl transfer between the nucleoside triphosphate and OAA. The sequence is that of Phosphoenolpyruvate carboxykinase (ATP) from Cereibacter sphaeroides (strain ATCC 17029 / ATH 2.4.9) (Rhodobacter sphaeroides).